Reading from the N-terminus, the 424-residue chain is Serine--tRNA ligase (424 aa).

Position 230 to 232 (230 to 232) interacts with L-serine; sequence TAE. 261–263 is an ATP binding site; sequence RSE. Glutamate 284 is a binding site for L-serine. 348-351 contacts ATP; the sequence is EISS. Serine 384 lines the L-serine pocket.

It belongs to the class-II aminoacyl-tRNA synthetase family. Type-1 seryl-tRNA synthetase subfamily. In terms of assembly, homodimer. The tRNA molecule binds across the dimer.

Its subcellular location is the cytoplasm. The enzyme catalyses tRNA(Ser) + L-serine + ATP = L-seryl-tRNA(Ser) + AMP + diphosphate + H(+). It catalyses the reaction tRNA(Sec) + L-serine + ATP = L-seryl-tRNA(Sec) + AMP + diphosphate + H(+). Its pathway is aminoacyl-tRNA biosynthesis; selenocysteinyl-tRNA(Sec) biosynthesis; L-seryl-tRNA(Sec) from L-serine and tRNA(Sec): step 1/1. Functionally, catalyzes the attachment of serine to tRNA(Ser). Is also able to aminoacylate tRNA(Sec) with serine, to form the misacylated tRNA L-seryl-tRNA(Sec), which will be further converted into selenocysteinyl-tRNA(Sec). The sequence is that of Serine--tRNA ligase from Desulfatibacillum aliphaticivorans.